Here is a 165-residue protein sequence, read N- to C-terminus: uncharacterized protein (165 aa).

A helical membrane pass occupies residues A16–V36.

It belongs to the asfivirus F165R family.

It is found in the host membrane. This is an uncharacterized protein from African swine fever virus (isolate Tick/Malawi/Lil 20-1/1983) (ASFV).